Consider the following 63-residue polypeptide: uncharacterized protein (63 aa).

Residues 15 to 37 (ISHCHLPLSPATAIAIIICFRIV) traverse the membrane as a helical segment.

It is found in the membrane. This is an uncharacterized protein from Saccharomyces cerevisiae (strain ATCC 204508 / S288c) (Baker's yeast).